Reading from the N-terminus, the 290-residue chain is UPF0761 membrane protein YihY (290 aa).

Transmembrane regions (helical) follow at residues 44–64 (LLSL…FPMF), 104–124 (VGAC…DSAL), 140–160 (FAVY…SLAI), 183–203 (IFPL…VPTI), 210–230 (AIVG…GFAL), and 244–264 (VLAV…IVLL).

This sequence belongs to the UPF0761 family.

The protein resides in the cell inner membrane. The polypeptide is UPF0761 membrane protein YihY (Shigella sonnei (strain Ss046)).